The sequence spans 136 residues: Ig heavy chain V-A2 region P-MU-3 (136 aa).

Residues 1 to 19 (METGLRWLLLVAVLKGVQC) form the signal peptide. Q20 is subject to Pyrrolidone carboxylic acid. Positions 20–127 (QSVKESEGGL…ENEFFNAIWG (108 aa)) constitute an Ig-like domain.

This chain is Ig heavy chain V-A2 region P-MU-3, found in Oryctolagus cuniculus (Rabbit).